A 436-amino-acid chain; its full sequence is GTPase Der (436 aa).

2 consecutive EngA-type G domains span residues 4 to 167 (PVIA…PKIE) and 176 to 351 (IRFS…ESHS). Residues 10–17 (GRPNVGKS), 57–61 (DTGGI), 119–122 (NKVD), 182–189 (GRPNVGKS), 229–233 (DTAGM), and 294–297 (NKWD) contribute to the GTP site. The KH-like domain occupies 352 to 436 (IRVQTNVLND…PIHIIARARD (85 aa)).

This sequence belongs to the TRAFAC class TrmE-Era-EngA-EngB-Septin-like GTPase superfamily. EngA (Der) GTPase family. As to quaternary structure, associates with the 50S ribosomal subunit.

Functionally, GTPase that plays an essential role in the late steps of ribosome biogenesis. The sequence is that of GTPase Der from Bacillus mycoides (strain KBAB4) (Bacillus weihenstephanensis).